The sequence spans 535 residues: MRLRNGTVATALAFITSFLTLSWYTTWQNGKEKLIAYQREFLALKERLRIAEHRISQRSSELNTIVQQFKRVGAETNGSKDALNKFSDNTLKLLKELTSKKSLQVPSIYYHLPHLLKNEGSLQPAVQIGNGRTGVSIVMGIPTVKREVKSYLIETLHSLIDNLYPEEKLDCVIVVFIGETDIDYVHGVVANLEKEFSKEISSGLVEVISPPESYYPDLTNLKETFGDSKERVRWRTKQNLDYCFLMMYAQEKGIYYIQLEDDIIVKQNYFNTIKNFALQLSSEEWMILEFSQLGFIGKMFQAPDLTLIVEFIFMFYKEKPIDWLLDHILWVKVCNPEKDAKHCDRQKANLRIHFRPSLFQHVGLHSSLSGKIQKLTDKDYMKPLLLKIHVNPPAEVSTSLKVYQGHTLEKTYMGEDFFWAITPIAGDYILFKFDKPVNVESYLFHSGNQEHPGDILLNTTVEVLPFKSEGLEISKETKDKRLEDGYFRIGKFENGVAEGMVDPSLNPISAFRLSVIQNSAVWAILNEIHIKKATN.

The Cytoplasmic segment spans residues M1–R4. A helical; Signal-anchor for type II membrane protein transmembrane segment spans residues N5 to W27. Residues Q28–N63 adopt a coiled-coil conformation. The Lumenal portion of the chain corresponds to Q28 to N535. N-linked (GlcNAc...) asparagine glycosylation is found at N77 and N458. S474 is modified (phosphoserine).

This sequence belongs to the glycosyltransferase 54 family. The cofactor is a divalent metal cation. Post-translationally, N-glycosylated.

The protein resides in the golgi apparatus membrane. Its subcellular location is the secreted. The enzyme catalyses N(4)-{beta-D-GlcNAc-(1-&gt;2)-alpha-D-Man-(1-&gt;3)-[beta-D-GlcNAc-(1-&gt;2)-alpha-D-Man-(1-&gt;6)]-beta-D-Man-(1-&gt;4)-beta-D-GlcNAc-(1-&gt;4)-beta-D-GlcNAc}-L-asparaginyl-[protein] + UDP-N-acetyl-alpha-D-glucosamine = N(4)-{beta-D-GlcNAc-(1-&gt;2)-[beta-D-GlcNAc-(1-&gt;4)]-alpha-D-Man-(1-&gt;3)-[beta-D-GlcNAc-(1-&gt;2)-alpha-D-Man-(1-&gt;6)]-beta-D-Man-(1-&gt;4)-beta-D-GlcNAc-(1-&gt;4)-beta-D-GlcNAc}-L-asparaginyl-[protein] + UDP + H(+). It catalyses the reaction an N(4)-{beta-D-GlcNAc-(1-&gt;2)-alpha-D-Man-(1-&gt;3)-[alpha-D-Man-(1-&gt;6)]-beta-D-Man-(1-&gt;4)-beta-D-GlcNAc-(1-&gt;4)-beta-D-GlcNAc}-L-asparaginyl-[protein] + UDP-N-acetyl-alpha-D-glucosamine = an N(4)-{beta-D-GlcNAc-(1-&gt;2)-[beta-D-GlcNAc-(1-&gt;4)]-alpha-D-Man-(1-&gt;3)-[alpha-D-Man-(1-&gt;6)]-beta-D-Man-(1-&gt;4)-beta-D-GlcNAc-(1-&gt;4)-beta-D-GlcNAc}-L-asparaginyl-[protein] + UDP + H(+). The catalysed reaction is an N(4)-{beta-D-GlcNAc-(1-&gt;2)-alpha-D-Man-(1-&gt;3)-[beta-D-GlcNAc-(1-&gt;2)-[beta-D-GlcNAc-(1-&gt;6)]-alpha-D-Man-(1-&gt;6)]-beta-D-Man-(1-&gt;4)-beta-D-GlcNAc-(1-&gt;4)-beta-D-GlcNAc}-L-asparaginyl-[protein] + UDP-N-acetyl-alpha-D-glucosamine = an N(4)-{beta-D-GlcNAc-(1-&gt;2)-[beta-D-GlcNAc-(1-&gt;4)]-alpha-D-Man-(1-&gt;3)-[beta-D-GlcNAc-(1-&gt;2)-[beta-D-GlcNAc-(1-&gt;6)]-alpha-D-Man-(1-&gt;6)]-beta-D-Man-(1-&gt;4)-beta-D-GlcNAc-(1-&gt;4)-beta-D-GlcNAc}-L-asparaginyl-[protein] + UDP + H(+). It carries out the reaction an N(4)-{beta-D-GlcNAc-(1-&gt;2)-alpha-D-Man-(1-&gt;3)-[beta-D-GlcNAc-(1-&gt;2)-alpha-D-Man-(1-&gt;6)]-beta-D-Man-(1-&gt;4)-beta-D-GlcNAc-(1-&gt;4)-[alpha-L-Fuc-(1-&gt;6)]-beta-D-GlcNAc}-L-asparaginyl-[protein] + UDP-N-acetyl-alpha-D-glucosamine = N(4)-{beta-D-GlcNAc-(1-&gt;2)-[beta-D-GlcNAc-(1-&gt;4)]-alpha-D-Man-(1-&gt;3)-[beta-D-GlcNAc-(1-&gt;2)-alpha-D-Man-(1-&gt;6)]-beta-D-Man-(1-&gt;4)-beta-D-GlcNAc-(1-&gt;4)-[alpha-L-Fuc-(1-&gt;6)]-beta-D-GlcNAc}-asparaginyl-[protein] + UDP + H(+). The enzyme catalyses an N(4)-{beta-D-GlcNAc-(1-&gt;2)-alpha-D-Man-(1-&gt;3)-[beta-D-Gal-(1-&gt;4)-beta-D-GlcNAc-(1-&gt;2)-alpha-D-Man-(1-&gt;6)]-beta-D-Man-(1-&gt;4)-beta-D-GlcNAc-(1-&gt;4)-beta-D-GlcNAc}-L-asparaginyl-[protein] + UDP-N-acetyl-alpha-D-glucosamine = an N(4)-{beta-D-GlcNAc-(1-&gt;2)-[beta-D-GlcNAc-(1-&gt;4)]-alpha-D-Man-(1-&gt;3)-[beta-D-Gal-(1-&gt;4)-beta-D-GlcNAc-(1-&gt;2)-alpha-D-Man-(1-&gt;6)]-beta-D-Man-(1-&gt;4)-beta-D-GlcNAc-(1-&gt;4)-beta-D-GlcNAc}-L-asparaginyl-[protein] + UDP + H(+). It catalyses the reaction N(4)-{beta-D-GlcNAc-(1-&gt;2)-alpha-D-Man-(1-&gt;3)-[alpha-D-Man-(1-&gt;3)-{alpha-D-Man-(1-&gt;6)}-alpha-D-Man-(1-&gt;6)]-beta-D-Man-(1-&gt;4)-beta-D-GlcNAc-(1-&gt;4)-beta-D-GlcNAc}-asparaginyl-[protein] + UDP-N-acetyl-alpha-D-glucosamine = N(4)-{beta-D-GlcNAc-(1-&gt;2)-[beta-D-GlcNAc-(1-&gt;4)]-alpha-D-Man-(1-&gt;3)-[alpha-D-Man-(1-&gt;3)-{alpha-D-Man-(1-&gt;6)}-alpha-D-Man-(1-&gt;6)]-beta-D-Man-(1-&gt;4)-beta-D-GlcNAc-(1-&gt;4)-beta-D-GlcNAc}-asparaginyl-[protein] + UDP + H(+). The catalysed reaction is N(4)-{beta-D-GlcNAc-(1-&gt;2)-alpha-D-Man-(1-&gt;3)-beta-D-Man-(1-&gt;4)-beta-D-GlcNAc-(1-&gt;4)-beta-D-GlcNAc}-asparaginyl-[protein] + UDP-N-acetyl-alpha-D-glucosamine = N(4)-{beta-D-GlcNAc-(1-&gt;2)-[beta-D-GlcNAc-(1-&gt;4)]-alpha-D-Man-(1-&gt;3)-beta-D-Man-(1-&gt;4)-beta-D-GlcNAc-(1-&gt;4)-beta-D-GlcNAc}-asparaginyl-[protein] + UDP + H(+). It functions in the pathway protein modification; protein glycosylation. Inhibited by UDP. In terms of biological role, glycosyltransferase that catalyze the transfer of GlcNAc from UDP-GlcNAc to the GlcNAcbeta1-2Manalpha1-3 arm of the core structure of N-linked glycans through a beta1-4 linkage and participates in the production of tri- and tetra-antennary N-linked sugar chains. Involved in glucose transport by mediating SLC2A2/GLUT2 glycosylation, thereby controlling cell-surface expression of SLC2A2 in pancreatic beta cells. This is Alpha-1,3-mannosyl-glycoprotein 4-beta-N-acetylglucosaminyltransferase A from Pongo abelii (Sumatran orangutan).